The chain runs to 235 residues: uncharacterized protein (235 aa).

The next 2 helical transmembrane spans lie at 167–187 and 190–210; these read AFKL…LNEL and LFAY…LLLW.

It localises to the membrane. This is an uncharacterized protein from Saccharomyces cerevisiae (strain ATCC 204508 / S288c) (Baker's yeast).